The following is a 572-amino-acid chain: Urease subunit alpha (572 aa).

A Urease domain is found at 136–572; that stretch reads GGIDTHIHWI…VPLAQRYFLF (437 aa). Positions 141, 143, and 224 each coordinate Ni(2+). At Lys-224 the chain carries N6-carboxylysine. His-226 is a substrate binding site. His-253 and His-279 together coordinate Ni(2+). His-327 (proton donor) is an active-site residue. Ni(2+) is bound at residue Asp-367.

The protein belongs to the metallo-dependent hydrolases superfamily. Urease alpha subunit family. In terms of assembly, heterotrimer of UreA (gamma), UreB (beta) and UreC (alpha) subunits. Three heterotrimers associate to form the active enzyme. The cofactor is Ni cation. In terms of processing, carboxylation allows a single lysine to coordinate two nickel ions.

Its subcellular location is the cytoplasm. The catalysed reaction is urea + 2 H2O + H(+) = hydrogencarbonate + 2 NH4(+). The protein operates within nitrogen metabolism; urea degradation; CO(2) and NH(3) from urea (urease route): step 1/1. The chain is Urease subunit alpha from Actinobacillus pleuropneumoniae serotype 3 (strain JL03).